A 197-amino-acid polypeptide reads, in one-letter code: Dephospho-CoA kinase (197 aa).

The region spanning 5–197 (RLGLTGSIGM…IAHIRETADA (193 aa)) is the DPCK domain. 13–18 (GMGKST) serves as a coordination point for ATP.

Belongs to the CoaE family.

It localises to the cytoplasm. The enzyme catalyses 3'-dephospho-CoA + ATP = ADP + CoA + H(+). It functions in the pathway cofactor biosynthesis; coenzyme A biosynthesis; CoA from (R)-pantothenate: step 5/5. Functionally, catalyzes the phosphorylation of the 3'-hydroxyl group of dephosphocoenzyme A to form coenzyme A. The protein is Dephospho-CoA kinase of Cereibacter sphaeroides (strain ATCC 17023 / DSM 158 / JCM 6121 / CCUG 31486 / LMG 2827 / NBRC 12203 / NCIMB 8253 / ATH 2.4.1.) (Rhodobacter sphaeroides).